Reading from the N-terminus, the 134-residue chain is Transmembrane protein 100 (134 aa).

Ser-15 is modified (phosphoserine). Helical transmembrane passes span 56 to 76 and 84 to 104; these read CVIPFAVVVLITGTVVTAVAY and IISILGLVLLSLGLFLLASSA. Ser-121 is modified (phosphoserine).

Interacts (via C-terminus) with TRPA1 and TRPV1. Interacts with TASOR.

Its subcellular location is the cell membrane. The protein localises to the membrane. It localises to the perikaryon. The protein resides in the cytoplasm. It is found in the perinuclear region. Its subcellular location is the endoplasmic reticulum. Its function is as follows. Plays a role during embryonic arterial endothelium differentiation and vascular morphogenesis through the ACVRL1 receptor-dependent signaling pathway upon stimulation by bone morphogenetic proteins, such as GDF2/BMP9 and BMP10. Involved in the regulation of nociception, acting as a modulator of the interaction between TRPA1 and TRPV1, two molecular sensors and mediators of pain signals in dorsal root ganglia (DRG) neurons. Mechanistically, it weakens their interaction, thereby releasing the inhibition of TRPA1 by TRPV1 and increasing the single-channel open probability of the TRPA1-TRPV1 complex. This chain is Transmembrane protein 100 (TMEM100), found in Bos taurus (Bovine).